The primary structure comprises 307 residues: Dihydroorotate dehydrogenase A (fumarate) (307 aa).

FMN-binding positions include serine 21 and 46-47 (KT). Substrate-binding positions include lysine 46, 70 to 74 (NSVGL), and asparagine 130. Asparagine 130 contacts FMN. Residue cysteine 133 is the Nucleophile of the active site. The FMN site is built by lysine 168 and isoleucine 194. Substrate is bound at residue 195-196 (NT). Residues glycine 220, 246 to 247 (GG), and 268 to 269 (GS) contribute to the FMN site.

The protein belongs to the dihydroorotate dehydrogenase family. Type 1 subfamily. Homodimer. It depends on FMN as a cofactor.

The protein localises to the cytoplasm. It catalyses the reaction (S)-dihydroorotate + fumarate = orotate + succinate. Its pathway is pyrimidine metabolism; UMP biosynthesis via de novo pathway. Its function is as follows. Catalyzes the conversion of dihydroorotate to orotate with fumarate as the electron acceptor. This chain is Dihydroorotate dehydrogenase A (fumarate) (pyrD), found in Lactobacillus helveticus (strain DPC 4571).